Here is a 630-residue protein sequence, read N- to C-terminus: Biosynthetic arginine decarboxylase (630 aa).

An N6-(pyridoxal phosphate)lysine modification is found at Lys99. A substrate-binding site is contributed by 281 to 291 (VDIGGGLGVDY).

Belongs to the Orn/Lys/Arg decarboxylase class-II family. SpeA subfamily. The cofactor is Mg(2+). Pyridoxal 5'-phosphate is required as a cofactor.

It catalyses the reaction L-arginine + H(+) = agmatine + CO2. Its pathway is amine and polyamine biosynthesis; agmatine biosynthesis; agmatine from L-arginine: step 1/1. Catalyzes the biosynthesis of agmatine from arginine. This is Biosynthetic arginine decarboxylase from Phocaeicola vulgatus (strain ATCC 8482 / DSM 1447 / JCM 5826 / CCUG 4940 / NBRC 14291 / NCTC 11154) (Bacteroides vulgatus).